Here is a 437-residue protein sequence, read N- to C-terminus: Adenosylhomocysteinase (437 aa).

Residues Thr-54, Asp-130, and Glu-155 each contribute to the substrate site. 156 to 158 (TTT) is a binding site for NAD(+). Lys-185 and Asp-189 together coordinate substrate. NAD(+)-binding positions include Asn-190, 219–224 (GYGDVG), Glu-242, Asn-277, 298–300 (IGH), and Asn-345.

It belongs to the adenosylhomocysteinase family. Homotetramer. NAD(+) is required as a cofactor.

Its subcellular location is the cytoplasm. It catalyses the reaction S-adenosyl-L-homocysteine + H2O = L-homocysteine + adenosine. Its pathway is amino-acid biosynthesis; L-homocysteine biosynthesis; L-homocysteine from S-adenosyl-L-homocysteine: step 1/1. Adenosylhomocysteine is a competitive inhibitor of S-adenosyl-L-methionine-dependent methyl transferase reactions; therefore adenosylhomocysteinase may play a key role in the control of methylations via regulation of the intracellular concentration of adenosylhomocysteine. This Leishmania donovani protein is Adenosylhomocysteinase.